The chain runs to 1007 residues: Calmodulin-binding transcription activator 1 (1007 aa).

The CG-1 DNA-binding region spans 18–144 (MEQLLSEAQH…YLEVKGNRTS (127 aa)). Over residues 148 to 164 (KENNSNSVNGTASVNID) the composition is skewed to polar residues. Positions 148-227 (KENNSNSVNG…VHGNRVRESD (80 aa)) are disordered. A compositionally biased stretch (low complexity) spans 165-176 (STASPTSTLSSL). The segment covering 183–202 (GDSQQASSVLRPSPEPQTGN) has biased composition (polar residues). The segment at 233 to 398 (DVRALDTVGN…TVECETAAAG (166 aa)) is transcription activation. ANK repeat units lie at residues 612–641 (DGQG…NINF) and 645–674 (NGWS…DAGA). IQ domains are found at residues 821-850 (LSCA…RIVK) and 844-873 (IRQR…SVGL). A calmodulin-binding region spans residues 869–891 (WSVGLLEKIILRWRRKGNGLRGF). Positions 915 to 943 (QEDEYDYLKEGRKQTEERLQKALTRVKSM) form a coiled coil. The residue at position 942 (Ser942) is a Phosphoserine.

Belongs to the CAMTA family. In terms of tissue distribution, expressed in roots, stems, leaves, pollen and siliques.

The protein resides in the nucleus. In terms of biological role, transcription activator that binds calmodulin in a calcium-dependent manner in vitro. Binds to the DNA consensus sequence 5'-[ACG]CGCG[GTC]-3'. Regulates transcriptional activity in response to calcium signals. Involved in freezing tolerance. Involved in freezing tolerance in association with CAMTA2 and CAMTA3. Contributes together with CAMTA2 and CAMTA3 to the positive regulation of the cold-induced expression of DREB1A/CBF3, DREB1B/CBF1 and DREB1C/CBF2. Involved in drought stress responses by regulating several drought-responsive genes. Involved in auxin signaling and responses to abiotic stresses. Activates the expression of the V-PPase proton pump AVP1 in pollen. This Arabidopsis thaliana (Mouse-ear cress) protein is Calmodulin-binding transcription activator 1.